The chain runs to 546 residues: Probable Xaa-Pro aminopeptidase pepP (546 aa).

Mn(2+) contacts are provided by D341, D352, E475, and E515.

The protein belongs to the peptidase M24B family. Requires Mn(2+) as cofactor.

The catalysed reaction is Release of any N-terminal amino acid, including proline, that is linked to proline, even from a dipeptide or tripeptide.. Catalyzes the removal of a penultimate prolyl residue from the N-termini of peptides. In Sclerotinia sclerotiorum (strain ATCC 18683 / 1980 / Ss-1) (White mold), this protein is Probable Xaa-Pro aminopeptidase pepP (pepP).